We begin with the raw amino-acid sequence, 324 residues long: Mevalonate kinase (324 aa).

103 to 113 (PPRAGLGSSAA) lines the ATP pocket. The active-site Proton acceptor is Asp-154.

This sequence belongs to the GHMP kinase family. Mevalonate kinase subfamily. As to quaternary structure, homodimer. Requires Mg(2+) as cofactor.

It localises to the cytoplasm. The catalysed reaction is (R)-mevalonate + ATP = (R)-5-phosphomevalonate + ADP + H(+). The protein operates within isoprenoid biosynthesis; isopentenyl diphosphate biosynthesis via mevalonate pathway; isopentenyl diphosphate from (R)-mevalonate: step 1/3. Functionally, catalyzes the phosphorylation of (R)-mevalonate (MVA) to (R)-mevalonate 5-phosphate (MVAP). Functions in the mevalonate (MVA) pathway leading to isopentenyl diphosphate (IPP), a key precursor for the biosynthesis of isoprenoid compounds such as archaeal membrane lipids. The protein is Mevalonate kinase of Aeropyrum pernix (strain ATCC 700893 / DSM 11879 / JCM 9820 / NBRC 100138 / K1).